Here is a 149-residue protein sequence, read N- to C-terminus: Probable flagellum biosynthesis repressor protein FlbT (149 aa).

It belongs to the FlbT family.

Has a post-transcriptional repressor function in flagellum biogenesis. Associates with the 5'-UTR of fljK mRNA and promotes its degradation. This Agrobacterium fabrum (strain C58 / ATCC 33970) (Agrobacterium tumefaciens (strain C58)) protein is Probable flagellum biosynthesis repressor protein FlbT.